Here is a 232-residue protein sequence, read N- to C-terminus: Ribose-5-phosphate isomerase A (232 aa).

Residues 31–34, 87–90, and 100–103 each bind substrate; these read TGST, DGAD, and KGGG. The active-site Proton acceptor is the E109. Substrate is bound at residue K127.

Belongs to the ribose 5-phosphate isomerase family. Homodimer.

It carries out the reaction aldehydo-D-ribose 5-phosphate = D-ribulose 5-phosphate. It functions in the pathway carbohydrate degradation; pentose phosphate pathway; D-ribose 5-phosphate from D-ribulose 5-phosphate (non-oxidative stage): step 1/1. In terms of biological role, catalyzes the reversible conversion of ribose-5-phosphate to ribulose 5-phosphate. This Bifidobacterium longum (strain NCC 2705) protein is Ribose-5-phosphate isomerase A.